The chain runs to 120 residues: uncharacterized protein (120 aa).

This is an uncharacterized protein from Mycobacterium tuberculosis (strain CDC 1551 / Oshkosh).